Reading from the N-terminus, the 23-residue chain is M-poneritoxin-Nc1a (23 aa).

It belongs to the non-disulfide-bridged peptide (NDBP) superfamily. Medium-length antimicrobial peptide (group 3) family. Ponericin-W subfamily. In terms of tissue distribution, expressed by the venom gland.

The protein localises to the secreted. Its subcellular location is the target cell membrane. Functionally, membrane-perturbating peptide with multiple activities. It is insecticidal, since it induces contractile paralysis in insects (L.cuprina) during several hours, and death after 24 hours. It shows antibacterial activity with higher activity against Gram-positive than Gram-negative bacteria. It is also antiparasitic, since it potently inhibits the larval development of the major pathogenic nematode of ruminants (H.contortus, IC(50)=5.1 uM), but fails to reduce the motility of adult males of the other nematode B.malayi. It also shows cytotoxic activity against HEK293 cells (EC(50)=12-14 uM) and induces hemolysis in human erythrocytes (EC(50)=28.6-48.2 uM). In addition, it causes an important increase in intracellular calcium concentration on neuronal and epithelial cell lines, which supports a non-specific membrane perturbation mechanism of action. In vivo, it induces pain by intraplantar injection into mice, suggesting a defensive function against vertebrate predators. This Neoponera commutata (Large hunting ant) protein is M-poneritoxin-Nc1a.